A 145-amino-acid chain; its full sequence is Galectin-5 (145 aa).

Ser-2 is modified (N-acetylserine). The 129-residue stretch at Phe-17–Thr-145 folds into the Galectin domain. Trp-77–Ser-83 is a binding site for a beta-D-galactoside.

Monomer. In terms of tissue distribution, erythrocytes.

In terms of biological role, may function in erythrocyte differentiation. The protein is Galectin-5 (Lgals5) of Rattus norvegicus (Rat).